The following is a 472-amino-acid chain: Aspartyl/glutamyl-tRNA(Asn/Gln) amidotransferase subunit B (472 aa).

This sequence belongs to the GatB/GatE family. GatB subfamily. As to quaternary structure, heterotrimer of A, B and C subunits.

It carries out the reaction L-glutamyl-tRNA(Gln) + L-glutamine + ATP + H2O = L-glutaminyl-tRNA(Gln) + L-glutamate + ADP + phosphate + H(+). The enzyme catalyses L-aspartyl-tRNA(Asn) + L-glutamine + ATP + H2O = L-asparaginyl-tRNA(Asn) + L-glutamate + ADP + phosphate + 2 H(+). Functionally, allows the formation of correctly charged Asn-tRNA(Asn) or Gln-tRNA(Gln) through the transamidation of misacylated Asp-tRNA(Asn) or Glu-tRNA(Gln) in organisms which lack either or both of asparaginyl-tRNA or glutaminyl-tRNA synthetases. The reaction takes place in the presence of glutamine and ATP through an activated phospho-Asp-tRNA(Asn) or phospho-Glu-tRNA(Gln). The protein is Aspartyl/glutamyl-tRNA(Asn/Gln) amidotransferase subunit B of Sulfolobus acidocaldarius (strain ATCC 33909 / DSM 639 / JCM 8929 / NBRC 15157 / NCIMB 11770).